Consider the following 447-residue polypeptide: UPF0210 protein lhv_0606 (447 aa).

Belongs to the UPF0210 family. As to quaternary structure, homodimer.

The sequence is that of UPF0210 protein lhv_0606 from Lactobacillus helveticus (strain DPC 4571).